The sequence spans 247 residues: DNA repair protein RecO (247 aa).

It belongs to the RecO family.

In terms of biological role, involved in DNA repair and RecF pathway recombination. The sequence is that of DNA repair protein RecO from Caldanaerobacter subterraneus subsp. tengcongensis (strain DSM 15242 / JCM 11007 / NBRC 100824 / MB4) (Thermoanaerobacter tengcongensis).